The primary structure comprises 76 residues: Acyl carrier protein (76 aa).

The 76-residue stretch at 1–76 (MDTFESVKAV…DVVAYIEANK (76 aa)) folds into the Carrier domain. An O-(pantetheine 4'-phosphoryl)serine modification is found at S36.

Belongs to the acyl carrier protein (ACP) family. In terms of processing, 4'-phosphopantetheine is transferred from CoA to a specific serine of apo-ACP by AcpS. This modification is essential for activity because fatty acids are bound in thioester linkage to the sulfhydryl of the prosthetic group.

It is found in the cytoplasm. It functions in the pathway lipid metabolism; fatty acid biosynthesis. Its function is as follows. Carrier of the growing fatty acid chain in fatty acid biosynthesis. This is Acyl carrier protein from Helicobacter hepaticus (strain ATCC 51449 / 3B1).